Consider the following 76-residue polypeptide: Alpha/kappa-conotoxin-like fe14.2 (76 aa).

The N-terminal stretch at 1–24 (MPSVRSVTCCCLLWMMLSVQLVTP) is a signal peptide. A propeptide spanning residues 25 to 39 (GSPGTAQLSGQRTAR) is cleaved from the precursor. 2 disulfide bridges follow: C46/C61 and C50/C63. At R64 the chain carries Arginine amide. A propeptide spanning residues 65 to 76 (GKRDVVSSSMAV) is cleaved from the precursor.

It belongs to the conotoxin J superfamily. In terms of tissue distribution, expressed by the venom duct.

Its subcellular location is the secreted. In terms of biological role, highly inhibits both nicotinic acetylcholine receptors (neuronal (alpha-3/beta-4) and muscular (alpha-1/beta-1/epsilon/delta) subtypes) and the voltage-gated potassium channel Kv1.6/KCNA6 subtype. The chain is Alpha/kappa-conotoxin-like fe14.2 from Conus ferrugineus (Cone snail).